A 248-amino-acid polypeptide reads, in one-letter code: 21S rRNA pseudouridine(2819) synthase (248 aa).

Residue Asp-58 is part of the active site.

Belongs to the pseudouridine synthase RluA family.

The protein resides in the mitochondrion. It catalyses the reaction uridine(2819) in 21S rRNA = pseudouridine(2819) in 21S rRNA. In terms of biological role, pseudouridylate synthase responsible for the pseudouridine-2819 formation in mitochondrial 21S rRNA. May modulate the efficiency or the fidelity of the mitochondrial translation machinery. The sequence is that of 21S rRNA pseudouridine(2819) synthase (PUS5) from Candida albicans (strain SC5314 / ATCC MYA-2876) (Yeast).